A 316-amino-acid chain; its full sequence is Epoxide hydrolase 2 (316 aa).

Residues Pro25 to Pro302 form the AB hydrolase-1 domain. Asp101 serves as the catalytic Nucleophile. Tyr150 is an an epoxide binding site. Tyr230 functions as the Proton donor in the catalytic mechanism. His295 serves as the catalytic Proton acceptor.

This sequence belongs to the AB hydrolase superfamily. Epoxide hydrolase family. As to quaternary structure, homodimer. Highly expressed in young fruits 15 days after anthesis (15-DAA). Also observed in stems and leaves.

The catalysed reaction is an epoxide + H2O = an ethanediol. It carries out the reaction (24S)-24,25-epoxycucurbitadienol + H2O = (24R)-24,25-dihydroxycucurbitadienol. It functions in the pathway secondary metabolite biosynthesis; terpenoid biosynthesis. Epoxide hydrolase involved in the biosynthesis of cucurbitacin and mogroside tetracyclic triterpene natural products (e.g. siamenoside I and mogrosides IV, V and VI). Cucurbitacins have cytotoxic properties and exhibit deterrent taste as a defense barrier against herbivores. Mogrosides are nonsugar highly oxygenated compounds used as high-intensity zero-calorie sweeteners; they also possess pharmacological properties such as regulating immunity, lowering blood sugar and lipid levels, protecting the liver, and acting as antioxidants and antitumor agents. Catalyzes the hydrolysis of aromatic epoxide-containing substrates, such as the conversion of 24,25-epoxycucurbitadienol to 24,25-dihydroxycucurbitadienol. In Siraitia grosvenorii (Monk's fruit), this protein is Epoxide hydrolase 2.